Here is a 122-residue protein sequence, read N- to C-terminus: Large ribosomal subunit protein uL14c (122 aa).

The protein belongs to the universal ribosomal protein uL14 family. In terms of assembly, part of the 50S ribosomal subunit.

The protein resides in the plastid. The protein localises to the chloroplast. Functionally, binds to 23S rRNA. This is Large ribosomal subunit protein uL14c from Acorus calamus (Sweet flag).